The following is a 251-amino-acid chain: Ubiquinone/menaquinone biosynthesis C-methyltransferase UbiE (251 aa).

S-adenosyl-L-methionine contacts are provided by residues Thr-74, Asp-95, and 123–124; that span reads NA.

This sequence belongs to the class I-like SAM-binding methyltransferase superfamily. MenG/UbiE family.

It carries out the reaction a 2-demethylmenaquinol + S-adenosyl-L-methionine = a menaquinol + S-adenosyl-L-homocysteine + H(+). The catalysed reaction is a 2-methoxy-6-(all-trans-polyprenyl)benzene-1,4-diol + S-adenosyl-L-methionine = a 5-methoxy-2-methyl-3-(all-trans-polyprenyl)benzene-1,4-diol + S-adenosyl-L-homocysteine + H(+). It functions in the pathway quinol/quinone metabolism; menaquinone biosynthesis; menaquinol from 1,4-dihydroxy-2-naphthoate: step 2/2. It participates in cofactor biosynthesis; ubiquinone biosynthesis. Methyltransferase required for the conversion of demethylmenaquinol (DMKH2) to menaquinol (MKH2) and the conversion of 2-polyprenyl-6-methoxy-1,4-benzoquinol (DDMQH2) to 2-polyprenyl-3-methyl-6-methoxy-1,4-benzoquinol (DMQH2). This chain is Ubiquinone/menaquinone biosynthesis C-methyltransferase UbiE, found in Marinomonas sp. (strain MWYL1).